Reading from the N-terminus, the 829-residue chain is Periplasmic nitrate reductase (829 aa).

Residues 1-30 form the signal peptide; sequence MNSPRPTPPPFAAAAAGLPILVRASNLVTE. Residues 36 to 92 form the 4Fe-4S Mo/W bis-MGD-type domain; that stretch reads LVWNKAPCRFCGTGCSVMVATRDGQVVATHGDIKAEVNRGINCVKGYFLSKIMYGSD. Residues Cys43, Cys46, Cys50, and Cys78 each contribute to the [4Fe-4S] cluster site. Mo-bis(molybdopterin guanine dinucleotide) is bound by residues Lys80, Gln147, Asn172, Cys176, 209–216, 240–244, 259–261, Met370, Gln374, Asn480, 506–507, Lys529, Asp556, and 716–725; these read WGSNMAEM, STFEH, QTD, SD, and TGRVLEHWHT. Phe792 is a substrate binding site. Asn800 and Lys817 together coordinate Mo-bis(molybdopterin guanine dinucleotide).

The protein belongs to the prokaryotic molybdopterin-containing oxidoreductase family. NasA/NapA/NarB subfamily. In terms of assembly, component of the periplasmic nitrate reductase NapAB complex composed of NapA and NapB. [4Fe-4S] cluster is required as a cofactor. It depends on Mo-bis(molybdopterin guanine dinucleotide) as a cofactor.

Its subcellular location is the periplasm. The enzyme catalyses 2 Fe(II)-[cytochrome] + nitrate + 2 H(+) = 2 Fe(III)-[cytochrome] + nitrite + H2O. Catalytic subunit of the periplasmic nitrate reductase complex NapAB. Receives electrons from NapB and catalyzes the reduction of nitrate to nitrite. In Pseudomonas aeruginosa (strain ATCC 15692 / DSM 22644 / CIP 104116 / JCM 14847 / LMG 12228 / 1C / PRS 101 / PAO1), this protein is Periplasmic nitrate reductase.